A 635-amino-acid polypeptide reads, in one-letter code: Threonine--tRNA ligase (635 aa).

Positions 1-58 constitute a TGS domain; sequence MIRVICDNETFELPTGSTAADFASKIKNSHYFAGVVINDQIKDLSTTLSEGDVLKFVT. Residues 237-528 form a catalytic region; it reads DHRVLGTKLD…LIEHFKGRFP (292 aa). The Zn(2+) site is built by Cys-328, His-379, and His-505.

This sequence belongs to the class-II aminoacyl-tRNA synthetase family. Homodimer. Zn(2+) serves as cofactor.

Its subcellular location is the cytoplasm. The enzyme catalyses tRNA(Thr) + L-threonine + ATP = L-threonyl-tRNA(Thr) + AMP + diphosphate + H(+). In terms of biological role, catalyzes the attachment of threonine to tRNA(Thr) in a two-step reaction: L-threonine is first activated by ATP to form Thr-AMP and then transferred to the acceptor end of tRNA(Thr). Also edits incorrectly charged L-seryl-tRNA(Thr). This Chlamydia felis (strain Fe/C-56) (Chlamydophila felis) protein is Threonine--tRNA ligase.